Reading from the N-terminus, the 144-residue chain is Large ribosomal subunit protein uL15 (144 aa).

The segment at 1-54 (MRLNTLSPAPGRVTSRKRVGRGIGSGLGKTAGRGHKGLKSRSGGTVKPGFEGGQ) is disordered. Over residues 21-31 (RGIGSGLGKTA) the composition is skewed to gly residues.

This sequence belongs to the universal ribosomal protein uL15 family. In terms of assembly, part of the 50S ribosomal subunit.

In terms of biological role, binds to the 23S rRNA. The protein is Large ribosomal subunit protein uL15 of Teredinibacter turnerae (strain ATCC 39867 / T7901).